Here is a 417-residue protein sequence, read N- to C-terminus: Serine hydroxymethyltransferase (417 aa).

Residues Leu121 and 125–127 (GHL) each bind (6S)-5,6,7,8-tetrahydrofolate. An N6-(pyridoxal phosphate)lysine modification is found at Lys229. 355-357 (SPF) provides a ligand contact to (6S)-5,6,7,8-tetrahydrofolate.

The protein belongs to the SHMT family. As to quaternary structure, homodimer. The cofactor is pyridoxal 5'-phosphate.

The protein localises to the cytoplasm. The catalysed reaction is (6R)-5,10-methylene-5,6,7,8-tetrahydrofolate + glycine + H2O = (6S)-5,6,7,8-tetrahydrofolate + L-serine. The protein operates within one-carbon metabolism; tetrahydrofolate interconversion. It functions in the pathway amino-acid biosynthesis; glycine biosynthesis; glycine from L-serine: step 1/1. Its function is as follows. Catalyzes the reversible interconversion of serine and glycine with tetrahydrofolate (THF) serving as the one-carbon carrier. This reaction serves as the major source of one-carbon groups required for the biosynthesis of purines, thymidylate, methionine, and other important biomolecules. Also exhibits THF-independent aldolase activity toward beta-hydroxyamino acids, producing glycine and aldehydes, via a retro-aldol mechanism. The chain is Serine hydroxymethyltransferase from Shewanella amazonensis (strain ATCC BAA-1098 / SB2B).